The sequence spans 259 residues: Probable ABC transporter permease protein RC0129 (259 aa).

The next 5 helical transmembrane spans lie at 13 to 35 (TVKFAQSVGSFSLFSFAAVSSII), 49 to 69 (LFIGFHSLPVVAMTTFFSGAV), 148 to 168 (VITAIITMPCLVLIGDIIGVM), 195 to 215 (PIDVISGLVKAGVFGFIISII), and 237 to 257 (AVVNSSILILISNYLITELFF).

It belongs to the MlaE permease family.

It localises to the cell inner membrane. Its function is as follows. Could be part of an ABC transporter complex. The protein is Probable ABC transporter permease protein RC0129 of Rickettsia conorii (strain ATCC VR-613 / Malish 7).